An 825-amino-acid polypeptide reads, in one-letter code: Glycerol-3-phosphate acyltransferase (825 aa).

Positions 306–311 (CHRSHM) match the HXXXXD motif motif. The disordered stretch occupies residues 802 to 825 (SASSSTEMEASTSSSQTAEETTQG).

Belongs to the GPAT/DAPAT family.

It localises to the cell inner membrane. The catalysed reaction is sn-glycerol 3-phosphate + an acyl-CoA = a 1-acyl-sn-glycero-3-phosphate + CoA. Its pathway is phospholipid metabolism; CDP-diacylglycerol biosynthesis; CDP-diacylglycerol from sn-glycerol 3-phosphate: step 1/3. In Pectobacterium atrosepticum (strain SCRI 1043 / ATCC BAA-672) (Erwinia carotovora subsp. atroseptica), this protein is Glycerol-3-phosphate acyltransferase.